A 399-amino-acid chain; its full sequence is 4-hydroxy-3-methylbut-2-enyl diphosphate reductase (399 aa).

Position 66 (Cys-66) interacts with [4Fe-4S] cluster. His-96 lines the (2E)-4-hydroxy-3-methylbut-2-enyl diphosphate pocket. His-96 contributes to the dimethylallyl diphosphate binding site. Residue His-96 coordinates isopentenyl diphosphate. Position 157 (Cys-157) interacts with [4Fe-4S] cluster. A (2E)-4-hydroxy-3-methylbut-2-enyl diphosphate-binding site is contributed by His-185. Residue His-185 coordinates dimethylallyl diphosphate. Residue His-185 participates in isopentenyl diphosphate binding. Glu-187 serves as the catalytic Proton donor. Thr-250 lines the (2E)-4-hydroxy-3-methylbut-2-enyl diphosphate pocket. Position 288 (Cys-288) interacts with [4Fe-4S] cluster. Residues Ser-317, Ser-318, Asn-319, and Ser-379 each contribute to the (2E)-4-hydroxy-3-methylbut-2-enyl diphosphate site. 4 residues coordinate dimethylallyl diphosphate: Ser-317, Ser-318, Asn-319, and Ser-379. Isopentenyl diphosphate is bound by residues Ser-317, Ser-318, Asn-319, and Ser-379.

Belongs to the IspH family. The cofactor is [4Fe-4S] cluster.

It catalyses the reaction isopentenyl diphosphate + 2 oxidized [2Fe-2S]-[ferredoxin] + H2O = (2E)-4-hydroxy-3-methylbut-2-enyl diphosphate + 2 reduced [2Fe-2S]-[ferredoxin] + 2 H(+). The enzyme catalyses dimethylallyl diphosphate + 2 oxidized [2Fe-2S]-[ferredoxin] + H2O = (2E)-4-hydroxy-3-methylbut-2-enyl diphosphate + 2 reduced [2Fe-2S]-[ferredoxin] + 2 H(+). The protein operates within isoprenoid biosynthesis; dimethylallyl diphosphate biosynthesis; dimethylallyl diphosphate from (2E)-4-hydroxy-3-methylbutenyl diphosphate: step 1/1. Its pathway is isoprenoid biosynthesis; isopentenyl diphosphate biosynthesis via DXP pathway; isopentenyl diphosphate from 1-deoxy-D-xylulose 5-phosphate: step 6/6. Functionally, catalyzes the conversion of 1-hydroxy-2-methyl-2-(E)-butenyl 4-diphosphate (HMBPP) into a mixture of isopentenyl diphosphate (IPP) and dimethylallyl diphosphate (DMAPP). Acts in the terminal step of the DOXP/MEP pathway for isoprenoid precursor biosynthesis. The chain is 4-hydroxy-3-methylbut-2-enyl diphosphate reductase from Synechococcus sp. (strain WH7803).